The primary structure comprises 508 residues: Photosystem II CP47 reaction center protein (508 aa).

Transmembrane regions (helical) follow at residues 21 to 36, 101 to 115, 140 to 156, 203 to 218, 237 to 252, and 457 to 472; these read SVHI…WAGS, IVFS…IWHW, GIHL…FGAF, IAAG…FHLS, VLSS…AFVV, and SFAL…HGAR.

It belongs to the PsbB/PsbC family. PsbB subfamily. As to quaternary structure, PSII is composed of 1 copy each of membrane proteins PsbA, PsbB, PsbC, PsbD, PsbE, PsbF, PsbH, PsbI, PsbJ, PsbK, PsbL, PsbM, PsbT, PsbX, PsbY, PsbZ, Psb30/Ycf12, at least 3 peripheral proteins of the oxygen-evolving complex and a large number of cofactors. It forms dimeric complexes. It depends on Binds multiple chlorophylls. PSII binds additional chlorophylls, carotenoids and specific lipids. as a cofactor.

Its subcellular location is the plastid. It is found in the chloroplast thylakoid membrane. One of the components of the core complex of photosystem II (PSII). It binds chlorophyll and helps catalyze the primary light-induced photochemical processes of PSII. PSII is a light-driven water:plastoquinone oxidoreductase, using light energy to abstract electrons from H(2)O, generating O(2) and a proton gradient subsequently used for ATP formation. This chain is Photosystem II CP47 reaction center protein, found in Glycine max (Soybean).